The chain runs to 202 residues: LexA repressor (202 aa).

Positions 32–52 (RAEVCSAFGFKSPNAAETHLR) form a DNA-binding region, H-T-H motif. Active-site for autocatalytic cleavage activity residues include Ser121 and Lys158.

It belongs to the peptidase S24 family. In terms of assembly, homodimer.

It carries out the reaction Hydrolysis of Ala-|-Gly bond in repressor LexA.. In terms of biological role, represses a number of genes involved in the response to DNA damage (SOS response), including recA and lexA. In the presence of single-stranded DNA, RecA interacts with LexA causing an autocatalytic cleavage which disrupts the DNA-binding part of LexA, leading to derepression of the SOS regulon and eventually DNA repair. This is LexA repressor from Azoarcus sp. (strain BH72).